We begin with the raw amino-acid sequence, 118 residues long: Small ribosomal subunit protein uS13 (118 aa).

Residues 92-118 (KKHLPVRGQRTKTNARTRKGPRKPIKK) form a disordered region.

Belongs to the universal ribosomal protein uS13 family. In terms of assembly, part of the 30S ribosomal subunit. Forms a loose heterodimer with protein S19. Forms two bridges to the 50S subunit in the 70S ribosome.

Its function is as follows. Located at the top of the head of the 30S subunit, it contacts several helices of the 16S rRNA. In the 70S ribosome it contacts the 23S rRNA (bridge B1a) and protein L5 of the 50S subunit (bridge B1b), connecting the 2 subunits; these bridges are implicated in subunit movement. Contacts the tRNAs in the A and P-sites. This chain is Small ribosomal subunit protein uS13, found in Wigglesworthia glossinidia brevipalpis.